The primary structure comprises 454 residues: Chaperone SurA (454 aa).

An N-terminal signal peptide occupies residues Met1 to Ala28. 2 consecutive PpiC domains span residues Asp177 to Ala278 and Leu287 to Glu386. The disordered stretch occupies residues Leu431–Arg454. Residues Pro443–Arg454 show a composition bias toward acidic residues.

The protein resides in the periplasm. The catalysed reaction is [protein]-peptidylproline (omega=180) = [protein]-peptidylproline (omega=0). Functionally, chaperone involved in the correct folding and assembly of outer membrane proteins. Recognizes specific patterns of aromatic residues and the orientation of their side chains, which are found more frequently in integral outer membrane proteins. May act in both early periplasmic and late outer membrane-associated steps of protein maturation. The chain is Chaperone SurA from Methylococcus capsulatus (strain ATCC 33009 / NCIMB 11132 / Bath).